We begin with the raw amino-acid sequence, 549 residues long: NADH-quinone oxidoreductase subunit N (549 aa).

14 helical membrane passes run 26–46 (LSPLLVVFAAGVIGVIVEAFV), 57–77 (ALAMVAVGVAFVLTLVQVGAL), 96–116 (PSLFFQGVILALALASLLLIA), 148–168 (HTEVYPLVMFAVLGMQLFTAA), 171–191 (FLTMFIALEVMSLPLYLLCGL), 206–226 (YFLLGAFSSAFFLFGIAMVYG), 253–273 (LLIGIAMIGVGMLFKVGTVPF), 297–317 (LVAAFGAMLRVFYVAFGTTVA), 321–341 (PMLWVVAILTMVVAAVIAVTQ), 347–367 (LLAYSSVVHAGFILTAVVAAN), 375–395 (MFYLAAYGFTTVGAFAIVTLV), 421–441 (AASLGLFLLAFAGIPLTSGFI), 466–486 (SAVTAFFYVRIIVLMFFAEPA), and 496–516 (GILTGTTVGLGVAATLLLGIL).

The protein belongs to the complex I subunit 2 family. As to quaternary structure, NDH-1 is composed of 14 different subunits. Subunits NuoA, H, J, K, L, M, N constitute the membrane sector of the complex.

Its subcellular location is the cell membrane. It catalyses the reaction a quinone + NADH + 5 H(+)(in) = a quinol + NAD(+) + 4 H(+)(out). Functionally, NDH-1 shuttles electrons from NADH, via FMN and iron-sulfur (Fe-S) centers, to quinones in the respiratory chain. The immediate electron acceptor for the enzyme in this species is believed to be a menaquinone. Couples the redox reaction to proton translocation (for every two electrons transferred, four hydrogen ions are translocated across the cytoplasmic membrane), and thus conserves the redox energy in a proton gradient. This is NADH-quinone oxidoreductase subunit N from Thermobifida fusca (strain YX).